A 398-amino-acid chain; its full sequence is Acetate kinase (398 aa).

Residue Asn7 coordinates Mg(2+). Lys14 is an ATP binding site. Residue Arg91 coordinates substrate. Asp148 functions as the Proton donor/acceptor in the catalytic mechanism. Residues 208-212, 283-285, and 331-335 contribute to the ATP site; these read HLGNG, DFR, and GLGEN. Mg(2+) is bound at residue Glu384.

The protein belongs to the acetokinase family. In terms of assembly, homodimer. Mg(2+) serves as cofactor. The cofactor is Mn(2+).

It is found in the cytoplasm. The enzyme catalyses acetate + ATP = acetyl phosphate + ADP. The protein operates within metabolic intermediate biosynthesis; acetyl-CoA biosynthesis; acetyl-CoA from acetate: step 1/2. Functionally, catalyzes the formation of acetyl phosphate from acetate and ATP. Can also catalyze the reverse reaction. This Natranaerobius thermophilus (strain ATCC BAA-1301 / DSM 18059 / JW/NM-WN-LF) protein is Acetate kinase.